The chain runs to 745 residues: uncharacterized protein (745 aa).

In terms of domain architecture, HTH araC/xylS-type spans 158-256; that stretch reads NQVCDYIELH…HQTPKQYRGD (99 aa). 2 consecutive DNA-binding regions (H-T-H motif) follow at residues 175 to 196 and 223 to 246; these read SELSEYVGWSESHLSKKFTESL and ITDIALQNGFSSAASFARTFKHFT.

This is an uncharacterized protein from Staphylococcus aureus (strain Mu50 / ATCC 700699).